Consider the following 335-residue polypeptide: Erlin-2-A (335 aa).

At 1–2 the chain is on the cytoplasmic side; that stretch reads MS. A helical transmembrane segment spans residues 3-23; the sequence is HAGAIVGLGVALIAAALFSAI. The Lumenal segment spans residues 24 to 335; it reads HKIEEGHVGV…GLDEAASAEE (312 aa). An N-linked (GlcNAc...) asparagine glycan is attached at N106.

Belongs to the band 7/mec-2 family.

Its subcellular location is the endoplasmic reticulum membrane. Its function is as follows. Mediates the endoplasmic reticulum-associated degradation (ERAD) of inositol 1,4,5-trisphosphate receptors (IP3Rs). Promotes sterol-accelerated ERAD of HMGCR. Involved in regulation of cellular cholesterol homeostasis by regulation the SREBP signaling pathway. The chain is Erlin-2-A (erlin2-a) from Xenopus laevis (African clawed frog).